The chain runs to 165 residues: CDP-archaeol synthase (165 aa).

Transmembrane regions (helical) follow at residues 41 to 61, 72 to 92, 103 to 123, and 127 to 147; these read GLICGVLAGVLIGLVQIWLVG, ILSVTLLALGALLGDMGKSFI, AWPVADQYDLVVGAFLLTIIF, and WFFAVVTLPVLIAILVITPVL.

This sequence belongs to the CDP-archaeol synthase family. Mg(2+) is required as a cofactor.

It localises to the cell membrane. It catalyses the reaction 2,3-bis-O-(geranylgeranyl)-sn-glycerol 1-phosphate + CTP + H(+) = CDP-2,3-bis-O-(geranylgeranyl)-sn-glycerol + diphosphate. It participates in membrane lipid metabolism; glycerophospholipid metabolism. In terms of biological role, catalyzes the formation of CDP-2,3-bis-(O-geranylgeranyl)-sn-glycerol (CDP-archaeol) from 2,3-bis-(O-geranylgeranyl)-sn-glycerol 1-phosphate (DGGGP) and CTP. This reaction is the third ether-bond-formation step in the biosynthesis of archaeal membrane lipids. In Methanoregula boonei (strain DSM 21154 / JCM 14090 / 6A8), this protein is CDP-archaeol synthase.